Consider the following 1196-residue polypeptide: Ice nucleation protein (1196 aa).

The interval 172 to 1147 (ATYGSTLSGD…LSAGEDSTLI (976 aa)) is octapeptide periodicity. Disordered regions lie at residues 269–304 (GYGS…GYGS), 319–352 (GSTQ…GYGS), and 415–442 (GSTQ…GSNL). Polar residues-rich tracts occupy residues 271–298 (GSTQ…GSNL) and 319–346 (GSTQ…GSNL).

Belongs to the bacterial ice nucleation protein family. In terms of assembly, membrane environment or aggregation seems to be required for ice nucleation activity.

The protein resides in the cell outer membrane. Its function is as follows. Ice nucleation proteins enable bacteria to nucleate crystallization in supercooled water. The polypeptide is Ice nucleation protein (inaV) (Pseudomonas syringae).